A 522-amino-acid polypeptide reads, in one-letter code: Putative aldehyde dehydrogenase-like protein C21C3 (522 aa).

The active-site Proton acceptor is Glu-239. The Nucleophile role is filled by Cys-273.

The protein belongs to the aldehyde dehydrogenase family.

It localises to the cytoplasm. The protein resides in the nucleus. This Schizosaccharomyces pombe (strain 972 / ATCC 24843) (Fission yeast) protein is Putative aldehyde dehydrogenase-like protein C21C3.